The primary structure comprises 67 residues: Kappa-conotoxin-like 1 (67 aa).

An N-terminal signal peptide occupies residues 1 to 26 (MMFRLTSVSCFLLVIACLNLFQVVLT). Cystine bridges form between Cys-29/Cys-43, Cys-36/Cys-48, Cys-42/Cys-51, and Cys-47/Cys-55. Ile-59 bears the Isoleucine amide mark. A propeptide spanning residues 63 to 67 (ATFQE) is cleaved from the precursor.

This sequence belongs to the conotoxin I2 superfamily. As to expression, expressed by the venom duct.

Its subcellular location is the secreted. Functionally, inhibits the vertebrate voltage-gated potassium channels Kv1.1/KCNA1 and Kv1.3/KCNA3. In Conus vexillum (Flag cone), this protein is Kappa-conotoxin-like 1.